A 187-amino-acid polypeptide reads, in one-letter code: Elongation factor P (187 aa).

This sequence belongs to the elongation factor P family.

It localises to the cytoplasm. Its pathway is protein biosynthesis; polypeptide chain elongation. In terms of biological role, involved in peptide bond synthesis. Stimulates efficient translation and peptide-bond synthesis on native or reconstituted 70S ribosomes in vitro. Probably functions indirectly by altering the affinity of the ribosome for aminoacyl-tRNA, thus increasing their reactivity as acceptors for peptidyl transferase. This is Elongation factor P from Rhodococcus erythropolis (strain PR4 / NBRC 100887).